We begin with the raw amino-acid sequence, 328 residues long: MDSANKNTKIFAEQLGNDFTISVDDEDMEMEYPLRSSTPTKVIDDQREILLQKASRISKLDEALCELNNESNGSIDLSIDSFIPSYDEFLHKKLLNEDTGHESKVSDQVKQVISTPMSTCFEQWFEGEEQSSTGNNQDISYSSVNSLSPKRRGISLMSIDANKLSPKKTSPNSGYITSPLRHPILLSETEPGTPTKNDSPAYIGLPSQPNSITTLNNTNQKFQVPDNDKPPMSSLNELSASYKPIVFDSSQHKTQGTDNNDSFYHDDTNCIHLSRLEKIRELLTFVQLELKYYVEPLKKELQETKTLLAQKEEEISNLKDKLQNAGLS.

Ser-170 is subject to Phosphoserine.

The protein localises to the cytoplasm. Its subcellular location is the nucleus. This is an uncharacterized protein from Schizosaccharomyces pombe (strain 972 / ATCC 24843) (Fission yeast).